The following is a 129-amino-acid chain: Small ribosomal subunit protein bS6 (129 aa).

The protein belongs to the bacterial ribosomal protein bS6 family.

Functionally, binds together with bS18 to 16S ribosomal RNA. The sequence is that of Small ribosomal subunit protein bS6 from Pelobacter propionicus (strain DSM 2379 / NBRC 103807 / OttBd1).